A 601-amino-acid polypeptide reads, in one-letter code: Alpha-terpineol synthase, chloroplastic (601 aa).

A chloroplast-targeting transit peptide spans 1-47; that stretch reads MSTISIHHVGILRNPLHSKSKRASINKPWSLSLPRSSSASRLVEPCR. Mn(2+) contacts are provided by Asp-357 and Asp-361. Residues 357-361 carry the DDXXD motif motif; it reads DDVYD. 2 homodimerization regions span residues 363 to 369 and 435 to 471; these read YGTLDEL and EAEWYQSGYTPSLEEYLTIAKISIGSLPILLSVELSL. Asp-499 and Glu-507 together coordinate Mn(2+).

Belongs to the terpene synthase family. As to quaternary structure, homodimer. Requires Mn(2+) as cofactor. The cofactor is Mg(2+).

It localises to the plastid. The protein localises to the chloroplast. The catalysed reaction is (2E)-geranyl diphosphate + H2O = (S)-alpha-terpineol + diphosphate. It catalyses the reaction (2E)-geranyl diphosphate + H2O = (R)-alpha-terpineol + diphosphate. It participates in secondary metabolite biosynthesis; terpenoid biosynthesis. Its function is as follows. Involved in the biosynthesis of phenolic monoterpenes natural products. Monoterpene synthase which catalyzes the conversion of geranyl diphosphate (GPP) to alpha-terpineol (isomer is not determined). The protein is Alpha-terpineol synthase, chloroplastic of Thymus caespititius (Cretan thyme).